The sequence spans 112 residues: UPF0102 protein JJD26997_0163 (112 aa).

Belongs to the UPF0102 family.

The protein is UPF0102 protein JJD26997_0163 of Campylobacter jejuni subsp. doylei (strain ATCC BAA-1458 / RM4099 / 269.97).